We begin with the raw amino-acid sequence, 433 residues long: Serine hydroxymethyltransferase (433 aa).

Residues Leu-121 and 125–127 (GHI) each bind (6S)-5,6,7,8-tetrahydrofolate. Lys-231 carries the post-translational modification N6-(pyridoxal phosphate)lysine.

The protein belongs to the SHMT family. In terms of assembly, homodimer. The cofactor is pyridoxal 5'-phosphate.

It is found in the cytoplasm. Its pathway is amino-acid biosynthesis; glycine biosynthesis; glycine from L-serine: step 1/1. Functionally, catalyzes the reversible interconversion of serine and glycine with a modified folate serving as the one-carbon carrier. Also exhibits a pteridine-independent aldolase activity toward beta-hydroxyamino acids, producing glycine and aldehydes, via a retro-aldol mechanism. The chain is Serine hydroxymethyltransferase from Picrophilus torridus (strain ATCC 700027 / DSM 9790 / JCM 10055 / NBRC 100828 / KAW 2/3).